The following is a 416-amino-acid chain: Multifunctional CCA protein (416 aa).

The ATP site is built by Gly-8 and Arg-11. Residues Gly-8 and Arg-11 each contribute to the CTP site. 2 residues coordinate Mg(2+): Asp-21 and Asp-23. Positions 91, 137, and 140 each coordinate ATP. Residues Arg-91, Arg-137, and Arg-140 each contribute to the CTP site. Positions 228-329 (TGVHTLMVLA…VKIFDKADFW (102 aa)) constitute an HD domain.

It belongs to the tRNA nucleotidyltransferase/poly(A) polymerase family. Bacterial CCA-adding enzyme type 1 subfamily. In terms of assembly, monomer. Can also form homodimers and oligomers. Mg(2+) serves as cofactor. The cofactor is Ni(2+).

It catalyses the reaction a tRNA precursor + 2 CTP + ATP = a tRNA with a 3' CCA end + 3 diphosphate. The catalysed reaction is a tRNA with a 3' CCA end + 2 CTP + ATP = a tRNA with a 3' CCACCA end + 3 diphosphate. Functionally, catalyzes the addition and repair of the essential 3'-terminal CCA sequence in tRNAs without using a nucleic acid template. Adds these three nucleotides in the order of C, C, and A to the tRNA nucleotide-73, using CTP and ATP as substrates and producing inorganic pyrophosphate. tRNA 3'-terminal CCA addition is required both for tRNA processing and repair. Also involved in tRNA surveillance by mediating tandem CCA addition to generate a CCACCA at the 3' terminus of unstable tRNAs. While stable tRNAs receive only 3'-terminal CCA, unstable tRNAs are marked with CCACCA and rapidly degraded. The sequence is that of Multifunctional CCA protein from Shewanella baltica (strain OS155 / ATCC BAA-1091).